Consider the following 213-residue polypeptide: Superoxide dismutase [Fe] (213 aa).

Fe cation is bound by residues histidine 26, histidine 73, aspartate 156, and histidine 160.

The protein belongs to the iron/manganese superoxide dismutase family. Homodimer. Fe cation is required as a cofactor.

The enzyme catalyses 2 superoxide + 2 H(+) = H2O2 + O2. Functionally, destroys superoxide anion radicals which are normally produced within the cells and which are toxic to biological systems. This is Superoxide dismutase [Fe] (sodB) from Helicobacter pylori (strain J99 / ATCC 700824) (Campylobacter pylori J99).